Consider the following 339-residue polypeptide: Phosphoribosylformylglycinamidine cyclo-ligase (339 aa).

Belongs to the AIR synthase family.

It is found in the cytoplasm. The enzyme catalyses 2-formamido-N(1)-(5-O-phospho-beta-D-ribosyl)acetamidine + ATP = 5-amino-1-(5-phospho-beta-D-ribosyl)imidazole + ADP + phosphate + H(+). Its pathway is purine metabolism; IMP biosynthesis via de novo pathway; 5-amino-1-(5-phospho-D-ribosyl)imidazole from N(2)-formyl-N(1)-(5-phospho-D-ribosyl)glycinamide: step 2/2. This is Phosphoribosylformylglycinamidine cyclo-ligase from Streptococcus thermophilus (strain ATCC BAA-491 / LMD-9).